Reading from the N-terminus, the 221-residue chain is Late embryogenesis abundant protein, group 3 (221 aa).

Residues 1–221 (MASHQDKASY…KDSSTITRDH (221 aa)) form a disordered region. A compositionally biased stretch (basic and acidic residues) spans 33–42 (TAQHAKDRAA). The segment covering 43–52 (DAAGHAAGKG) has biased composition (low complexity). Composition is skewed to basic and acidic residues over residues 53 to 63 (QDAKEATKQKA) and 72 to 147 (KKTD…KQKA). Residues 212 to 221 (KDSSTITRDH) show a composition bias toward polar residues.

Belongs to the LEA type 4 family.

The sequence is that of Late embryogenesis abundant protein, group 3 (MGL3) from Zea mays (Maize).